A 338-amino-acid polypeptide reads, in one-letter code: Ferrochelatase (338 aa).

The Fe cation site is built by H189 and E294.

The protein belongs to the ferrochelatase family.

The protein localises to the cytoplasm. It carries out the reaction heme b + 2 H(+) = protoporphyrin IX + Fe(2+). Its pathway is porphyrin-containing compound metabolism; protoheme biosynthesis; protoheme from protoporphyrin-IX: step 1/1. Its function is as follows. Catalyzes the ferrous insertion into protoporphyrin IX. This chain is Ferrochelatase, found in Pseudomonas putida (strain ATCC 700007 / DSM 6899 / JCM 31910 / BCRC 17059 / LMG 24140 / F1).